A 462-amino-acid chain; its full sequence is Sensor histidine kinase RegB (462 aa).

The Cytoplasmic portion of the chain corresponds to 1-25; that stretch reads MILGPDGILNRDTRGDWVRLRTLIL. A helical transmembrane segment spans residues 26 to 45; that stretch reads LRWMAVAGQLAAIVVTDWYL. Residues 46 to 51 lie on the Extracellular side of the membrane; it reads GVRLPM. Residues 52-70 traverse the membrane as a helical segment; the sequence is GLCFMAVGASVIANVIATF. Over 71-78 the chain is Cytoplasmic; sequence VFPQNRRL. A helical transmembrane segment spans residues 79–96; sequence TEFQALMILLFDLTQLSF. Topologically, residues 97 to 103 are extracellular; sequence LLFLTGG. A helical transmembrane segment spans residues 104 to 123; it reads LTNPFALLILAPVTISALAL. Topologically, residues 124–129 are cytoplasmic; the sequence is ELRTTV. Residues 130-149 traverse the membrane as a helical segment; sequence ILGAIAIGLLTFTAYFHLPL. At 150–164 the chain is on the extracellular side; it reads ILADGSSLSVPRMFE. Residues 165 to 182 form a helical membrane-spanning segment; that stretch reads FGFWLAIVIGILFLGLYS. Over 183–462 the chain is Cytoplasmic; the sequence is RRVAIEIRSM…PLGENVLIQT (280 aa). Residues 218 to 445 enclose the Histidine kinase domain; it reads AAAHELGTPL…IVEVIWPVDR (228 aa). Position 221 is a phosphohistidine; by autocatalysis (His-221).

Its subcellular location is the cell inner membrane. The catalysed reaction is ATP + protein L-histidine = ADP + protein N-phospho-L-histidine.. Member of the two-component regulatory system RegB/RegA. Involved in the positive regulation of photosynthesis gene expression in response to anaerobiosis. Also involved in positive regulation of the cbbI and cbbII Calvin cycle CO2 fixation operons, as well as in regulation of expression of genes involved in alternative CO2 fixation pathways. Phosphorylates RegA/PrrA. The protein is Sensor histidine kinase RegB (regB) of Cereibacter sphaeroides (strain ATCC 17023 / DSM 158 / JCM 6121 / CCUG 31486 / LMG 2827 / NBRC 12203 / NCIMB 8253 / ATH 2.4.1.) (Rhodobacter sphaeroides).